The primary structure comprises 403 residues: Glucose-signaling factor 2 (403 aa).

The Lumenal portion of the chain corresponds to 1–177 (MEIYIRLNAD…QEVQANYSSL (177 aa)). N-linked (GlcNAc...) asparagine glycosylation is found at N89 and N173. Residues 178–198 (VAQWLFFVMHIFKVGIITLFL) traverse the membrane as a helical; Signal-anchor for type II membrane protein segment. The Cytoplasmic segment spans residues 199–403 (KLGIANPISF…IKKNDLKKSN (205 aa)). Residues 330 to 388 (ELENNLKKILEEYDGDIGKMNAEIRRFRRFGIYEPDEKLASLVKLRREIADEKEKASNN) adopt a coiled-coil conformation.

Its subcellular location is the endoplasmic reticulum membrane. May be involved in the secretion of hexose transporters from the endoplasmic reticulum. Involved in secretion of GAL2 and HXT1. In Saccharomyces cerevisiae (strain ATCC 204508 / S288c) (Baker's yeast), this protein is Glucose-signaling factor 2 (GSF2).